A 226-amino-acid polypeptide reads, in one-letter code: Imidazoleglycerol-phosphate dehydratase (226 aa).

The segment at 23–55 (LTGGPIERPQPSLFASEKGANTAGPDDASQTTA) is disordered.

This sequence belongs to the imidazoleglycerol-phosphate dehydratase family.

The enzyme catalyses D-erythro-1-(imidazol-4-yl)glycerol 3-phosphate = 3-(imidazol-4-yl)-2-oxopropyl phosphate + H2O. The protein operates within amino-acid biosynthesis; L-histidine biosynthesis; L-histidine from 5-phospho-alpha-D-ribose 1-diphosphate: step 6/9. The sequence is that of Imidazoleglycerol-phosphate dehydratase (HIS3) from Maudiozyma humilis (Sour dough yeast).